Here is a 322-residue protein sequence, read N- to C-terminus: Peptidase 1 (322 aa).

The N-terminal stretch at 1–18 (MKFVLAIASLLVLSVVYA) is a signal peptide. The propeptide occupies 19 to 99 (YPSEIRTFEE…LKKEFDLDAG (81 aa)). A disulfide bond links Cys131 and Cys171. Residue Cys134 is part of the active site. N-linked (GlcNAc...) asparagine glycosylation occurs at Asn152. Catalysis depends on residues His270 and Asn290.

This sequence belongs to the peptidase C1 family. In terms of tissue distribution, expressed in the gut.

It localises to the secreted. The enzyme catalyses Broad endopeptidase specificity.. Its function is as follows. Probable thiol protease. This is Peptidase 1 from Psoroptes ovis (Sheep scab mite).